A 774-amino-acid polypeptide reads, in one-letter code: Shugoshin (774 aa).

Residues 41 to 105 are a coiled coil; sequence SLRIRGLENE…AELSSLLASL (65 aa). Disordered regions lie at residues 106–151, 205–661, and 676–774; these read GEPP…QEGR, SPSP…DAQL, and CASP…SMML. Basic and acidic residues predominate over residues 109–120; that stretch reads PSKRRLSEERRY. A compositionally biased stretch (acidic residues) spans 214–224; the sequence is AEETETTEQVE. The span at 297–318 shows a compositional bias: polar residues; it reads GDNQNEPNKATKLQQGKENGNE. Residues 382–398 are compositionally biased toward basic and acidic residues; that stretch reads KGKEKVDLPAPDKKSAV. The segment covering 399–409 has biased composition (polar residues); the sequence is EETQGNSTSAF. 2 stretches are compositionally biased toward basic and acidic residues: residues 482-495 and 549-558; these read NLRDKMRRPTKELF and FEKEKEKEPQ. Polar residues-rich tracts occupy residues 595 to 604 and 640 to 651; these read PSVQEQSTLN and QSMSRSVPTIPT. Over residues 706–722 the composition is skewed to low complexity; sequence ASSAASTETTATASAKP. A compositionally biased stretch (acidic residues) spans 743 to 754; it reads LAQEEEDEEDVG. Residues 765–774 are compositionally biased toward basic residues; the sequence is RASRRRSMML.

The protein belongs to the shugoshin family.

The protein resides in the nucleus. Its subcellular location is the chromosome. It localises to the centromere. In terms of biological role, plays a central role in chromosome cohesion during cell division by preventing premature dissociation of cohesin complex from centromeres after prophase, when most of cohesin complex dissociates from chromosomes arms. This Neurospora crassa (strain ATCC 24698 / 74-OR23-1A / CBS 708.71 / DSM 1257 / FGSC 987) protein is Shugoshin (sgo-1).